Here is a 335-residue protein sequence, read N- to C-terminus: Glyceraldehyde-3-phosphate dehydrogenase (335 aa).

NAD(+)-binding positions include 13-14 and glycine 111; that span reads TI. 140–142 provides a ligand contact to D-glyceraldehyde 3-phosphate; sequence SCN. The Nucleophile role is filled by cysteine 141. Arginine 169 is an NAD(+) binding site. D-glyceraldehyde 3-phosphate is bound at residue 195 to 196; sequence HG. Glutamine 300 contacts NAD(+).

The protein belongs to the glyceraldehyde-3-phosphate dehydrogenase family. As to quaternary structure, homotetramer.

It is found in the cytoplasm. The catalysed reaction is D-glyceraldehyde 3-phosphate + phosphate + NADP(+) = (2R)-3-phospho-glyceroyl phosphate + NADPH + H(+). The enzyme catalyses D-glyceraldehyde 3-phosphate + phosphate + NAD(+) = (2R)-3-phospho-glyceroyl phosphate + NADH + H(+). The protein operates within carbohydrate degradation; glycolysis; pyruvate from D-glyceraldehyde 3-phosphate: step 1/5. The chain is Glyceraldehyde-3-phosphate dehydrogenase from Methanococcoides burtonii (strain DSM 6242 / NBRC 107633 / OCM 468 / ACE-M).